A 178-amino-acid chain; its full sequence is Adenine phosphoribosyltransferase (178 aa).

The protein belongs to the purine/pyrimidine phosphoribosyltransferase family. In terms of assembly, homodimer.

It is found in the cytoplasm. It carries out the reaction AMP + diphosphate = 5-phospho-alpha-D-ribose 1-diphosphate + adenine. The protein operates within purine metabolism; AMP biosynthesis via salvage pathway; AMP from adenine: step 1/1. In terms of biological role, catalyzes a salvage reaction resulting in the formation of AMP, that is energically less costly than de novo synthesis. This is Adenine phosphoribosyltransferase from Cereibacter sphaeroides (strain KD131 / KCTC 12085) (Rhodobacter sphaeroides).